Here is a 373-residue protein sequence, read N- to C-terminus: Leucoanthocyanidin dioxygenase 2 (373 aa).

The Fe2OG dioxygenase domain maps to 216 to 315 (LLLQLKINYY…RVSWVVFCEP (100 aa)). Fe cation contacts are provided by histidine 240, aspartate 242, and histidine 296. A 2-oxoglutarate-binding site is contributed by arginine 306.

The protein belongs to the iron/ascorbate-dependent oxidoreductase family. L-ascorbate serves as cofactor. It depends on Fe(2+) as a cofactor.

It catalyses the reaction a (2R,3S,4S)-leucoanthocyanidin + 2-oxoglutarate + O2 = a 4-H-anthocyanidin with a 3-hydroxy group + succinate + CO2 + 2 H2O. The protein operates within pigment biosynthesis; anthocyanin biosynthesis. In terms of biological role, involved in anthocyanin and protoanthocyanidin biosynthesis by catalyzing the oxidation of leucoanthocyanidins into anthocyanidins. This Oryza sativa subsp. japonica (Rice) protein is Leucoanthocyanidin dioxygenase 2.